The chain runs to 74 residues: Translational regulator CsrA (74 aa).

This sequence belongs to the CsrA/RsmA family. In terms of assembly, homodimer. The beta-strands of each monomer intercalate to form a hydrophobic core while the alpha-helices form wings that extend away from the core. Two molecules of FliW interact with 1 homodimer. mRNA and FliW bind to different sites on CsrA.

It localises to the cytoplasm. A translational regulator that binds mRNA to regulate translation initiation and/or mRNA stability. Usually binds in the 5'-UTR at or near the Shine-Dalgarno sequence preventing ribosome-binding, thus repressing translation. Represses expression of flagellin (hag) in a post-transcriptional fashion. Specifically binds to 2 sites in the 5'-UTR of hag mRNA in a cooperative fashion; the second site overlaps the Shine-Dalgarno sequence and prevents 30S ribosomal subunit binding. Mutation of either binding site abolishes CsrA regulation of hag expression. Repression is greater in the 1A96 than 168 genetic background and higher in minimal than rich medium. Translation repression is antagonized by FliW. Partner switching by flagellin between FliW and CsrA provides a flagellar assembly checkpoint to tightly control the timing of flagellin synthesis. Flagellin binds to assembly factor FliW, freeing CsrA to repress translation of the flagellin mRNA. When the flagellar hook is assembled flagellin is secreted, depleting intracellular flagellin, which frees FliW to interact with CsrA and inhibits CsrA binding to mRNA. This derepresses flagellin translation and provides protein for flagellar assembly. Once the flagellar filament is completed cytoplasmic flagellin levels rise and CsrA translation repression of flagellin reinitiates. Overexpression leads to a dramatic reduction in motility, a significant reduction in flagellin synthesis and reduced flagella assembly. This Bacillus subtilis (strain 168) protein is Translational regulator CsrA.